Here is a 459-residue protein sequence, read N- to C-terminus: tRNA modification GTPase MnmE (459 aa).

Positions 29, 86, and 125 each coordinate (6S)-5-formyl-5,6,7,8-tetrahydrofolate. The 162-residue stretch at 221-382 (GMNVVIAGRP…LTEHLKAVMG (162 aa)) folds into the TrmE-type G domain. Asn231 is a binding site for K(+). GTP contacts are provided by residues 231–236 (NAGKSS), 250–256 (TNIEGTT), and 275–278 (DTAG). Ser235 serves as a coordination point for Mg(2+). 3 residues coordinate K(+): Thr250, Ile252, and Thr255. Thr256 contacts Mg(2+). Lys459 contributes to the (6S)-5-formyl-5,6,7,8-tetrahydrofolate binding site.

It belongs to the TRAFAC class TrmE-Era-EngA-EngB-Septin-like GTPase superfamily. TrmE GTPase family. Homodimer. Heterotetramer of two MnmE and two MnmG subunits. K(+) serves as cofactor.

Its subcellular location is the cytoplasm. Its function is as follows. Exhibits a very high intrinsic GTPase hydrolysis rate. Involved in the addition of a carboxymethylaminomethyl (cmnm) group at the wobble position (U34) of certain tRNAs, forming tRNA-cmnm(5)s(2)U34. The protein is tRNA modification GTPase MnmE of Marinomonas sp. (strain MWYL1).